The sequence spans 227 residues: Deoxyribose-phosphate aldolase (227 aa).

Asp96 serves as the catalytic Proton donor/acceptor. The Schiff-base intermediate with acetaldehyde role is filled by Lys158. Catalysis depends on Lys187, which acts as the Proton donor/acceptor.

This sequence belongs to the DeoC/FbaB aldolase family. DeoC type 1 subfamily.

It is found in the cytoplasm. It catalyses the reaction 2-deoxy-D-ribose 5-phosphate = D-glyceraldehyde 3-phosphate + acetaldehyde. It participates in carbohydrate degradation; 2-deoxy-D-ribose 1-phosphate degradation; D-glyceraldehyde 3-phosphate and acetaldehyde from 2-deoxy-alpha-D-ribose 1-phosphate: step 2/2. In terms of biological role, catalyzes a reversible aldol reaction between acetaldehyde and D-glyceraldehyde 3-phosphate to generate 2-deoxy-D-ribose 5-phosphate. The polypeptide is Deoxyribose-phosphate aldolase (Desulfotalea psychrophila (strain LSv54 / DSM 12343)).